The following is a 374-amino-acid chain: Dihydroorotate dehydrogenase (quinone) (374 aa).

Residues 78-82 (AGFDK) and Thr-102 contribute to the FMN site. A substrate-binding site is contributed by Lys-82. Substrate is bound at residue 127–131 (NRMGF). Residues Asn-159 and Asn-192 each contribute to the FMN site. Asn-192 serves as a coordination point for substrate. Ser-195 (nucleophile) is an active-site residue. Asn-197 serves as a coordination point for substrate. FMN-binding residues include Lys-230 and Thr-258. Residue 259–260 (NT) coordinates substrate. FMN-binding positions include Gly-287, Gly-316, and 337 to 338 (YT).

This sequence belongs to the dihydroorotate dehydrogenase family. Type 2 subfamily. In terms of assembly, monomer. The cofactor is FMN.

It is found in the cell membrane. It catalyses the reaction (S)-dihydroorotate + a quinone = orotate + a quinol. The protein operates within pyrimidine metabolism; UMP biosynthesis via de novo pathway; orotate from (S)-dihydroorotate (quinone route): step 1/1. In terms of biological role, catalyzes the conversion of dihydroorotate to orotate with quinone as electron acceptor. The protein is Dihydroorotate dehydrogenase (quinone) of Acaryochloris marina (strain MBIC 11017).